The following is a 187-amino-acid chain: Troponin I, slow skeletal muscle (187 aa).

P2 carries the post-translational modification N-acetylproline. Residues 2–48 (PEVERKPKITASRKLLLKSLMLAKAKECWEQEHEEREAEKVRYLAER) form an involved in binding TNC region. A Phosphoserine modification is found at S58. Residues 97–118 (LKLKVMDLRGKFKRPPLRRVRV) form an involved in binding TNC and actin region.

This sequence belongs to the troponin I family. As to quaternary structure, binds to actin and tropomyosin. As to expression, highest levels observed in human skeletal muscle (e.g. gastrocnemious muscle), differentiated cultures of primary human muscle cells and rhabdomyosarcoma cells cultured in low serum medium. Expressed in C2 muscle cell myoblasts and myotubes.

In terms of biological role, troponin I is the inhibitory subunit of troponin, the thin filament regulatory complex which confers calcium-sensitivity to striated muscle actomyosin ATPase activity. The polypeptide is Troponin I, slow skeletal muscle (TNNI1) (Homo sapiens (Human)).